We begin with the raw amino-acid sequence, 798 residues long: PR domain zinc finger protein 4 (798 aa).

In terms of domain architecture, SET spans 408–525 (KQLVLRQSIV…PENELLFYYS (118 aa)). C2H2-type zinc fingers lie at residues 586–608 (WKCS…FMGH), 614–636 (HKCD…LKIH), 642–664 (YRCT…MVIH), 670–692 (LKCD…VLIH), and 698–720 (IKCP…LNSH). The C2H2-type 6; degenerate zinc-finger motif lies at 726–747 (YVCEKCTKAYLTKYHLTRHLKA). Residues 750 to 798 (EPASSSSAQDDEDEDGDSGEDGLPGSMTTEGCRMSSAVYSADESLSAHK) are disordered. Acidic residues predominate over residues 758-769 (QDDEDEDGDSGE).

The protein belongs to the class V-like SAM-binding methyltransferase superfamily.

The protein resides in the nucleus. Functionally, may function as a transcription factor involved in cell differentiation. This Rattus norvegicus (Rat) protein is PR domain zinc finger protein 4 (Prdm4).